The primary structure comprises 743 residues: 1,4-alpha-glucan branching enzyme GlgB (743 aa).

Residue aspartate 423 is the Nucleophile of the active site. The active-site Proton donor is glutamate 476.

This sequence belongs to the glycosyl hydrolase 13 family. GlgB subfamily. Monomer.

It catalyses the reaction Transfers a segment of a (1-&gt;4)-alpha-D-glucan chain to a primary hydroxy group in a similar glucan chain.. The protein operates within glycan biosynthesis; glycogen biosynthesis. Functionally, catalyzes the formation of the alpha-1,6-glucosidic linkages in glycogen by scission of a 1,4-alpha-linked oligosaccharide from growing alpha-1,4-glucan chains and the subsequent attachment of the oligosaccharide to the alpha-1,6 position. The sequence is that of 1,4-alpha-glucan branching enzyme GlgB from Pseudomonas fluorescens (strain ATCC BAA-477 / NRRL B-23932 / Pf-5).